Here is a 208-residue protein sequence, read N- to C-terminus: MGKKRSASSSRWLAEHFKDQFVQKAHKQKLRSRAYFKLDEIQQSDRLFRPGMTVVDLGAAPGGWSQYAVTQIGNQGRIIACDILDMNPIVGVDFLQGDFREVSVLNALLARVGDEMVDVVMSDMAPNFSGMPSVDIPRAMYLVELALDMCRQVLAPKGSFVVKVFQGEGFDDYLRDIRSMFTTVKVRKPEASRDRSREVYIVATGYKG.

S-adenosyl-L-methionine-binding residues include Gly62, Trp64, Asp82, Asp98, and Asp123. Lys163 serves as the catalytic Proton acceptor.

Belongs to the class I-like SAM-binding methyltransferase superfamily. RNA methyltransferase RlmE family.

It localises to the cytoplasm. It carries out the reaction uridine(2552) in 23S rRNA + S-adenosyl-L-methionine = 2'-O-methyluridine(2552) in 23S rRNA + S-adenosyl-L-homocysteine + H(+). Functionally, specifically methylates the uridine in position 2552 of 23S rRNA at the 2'-O position of the ribose in the fully assembled 50S ribosomal subunit. The sequence is that of Ribosomal RNA large subunit methyltransferase E from Haemophilus ducreyi (strain 35000HP / ATCC 700724).